The chain runs to 198 residues: Ribonuclease 3-like protein 1 (198 aa).

The span at 85 to 110 shows a compositional bias: basic and acidic residues; it reads KKLAPKPDEEHTTTTKPISKDDESKT. The segment at 85–115 is disordered; it reads KKLAPKPDEEHTTTTKPISKDDESKTRRGSA. The 78-residue stretch at 114–191 folds into the DRBM domain; the sequence is SAKSVLHEMC…AEGALWYLEH (78 aa).

The protein is Ribonuclease 3-like protein 1 (RTL1) of Arabidopsis thaliana (Mouse-ear cress).